A 173-amino-acid chain; its full sequence is Shikimate kinase 1 (173 aa).

14–19 (GAGKST) provides a ligand contact to ATP. Residue Ser-18 participates in Mg(2+) binding. Substrate contacts are provided by Asp-36, Arg-60, and Gly-82. Arg-120 serves as a coordination point for ATP. Substrate is bound at residue Arg-140. Gln-157 serves as a coordination point for ATP.

The protein belongs to the shikimate kinase family. Monomer. Mg(2+) is required as a cofactor.

The protein localises to the cytoplasm. It catalyses the reaction shikimate + ATP = 3-phosphoshikimate + ADP + H(+). It participates in metabolic intermediate biosynthesis; chorismate biosynthesis; chorismate from D-erythrose 4-phosphate and phosphoenolpyruvate: step 5/7. In terms of biological role, catalyzes the specific phosphorylation of the 3-hydroxyl group of shikimic acid using ATP as a cosubstrate. The polypeptide is Shikimate kinase 1 (Pectobacterium atrosepticum (strain SCRI 1043 / ATCC BAA-672) (Erwinia carotovora subsp. atroseptica)).